Reading from the N-terminus, the 181-residue chain is CASP-like protein 1F2 (181 aa).

The Cytoplasmic portion of the chain corresponds to M1 to N18. A helical transmembrane segment spans residues I19–T39. Residues W40–S70 lie on the Extracellular side of the membrane. A glycan (N-linked (GlcNAc...) asparagine) is linked at N59. A helical membrane pass occupies residues Y71 to G91. The Cytoplasmic portion of the chain corresponds to R92–Y100. Residues F101 to A121 form a helical membrane-spanning segment. Over T122–R150 the chain is Extracellular. Residues A151 to T171 traverse the membrane as a helical segment. The Cytoplasmic portion of the chain corresponds to S172–V181.

It belongs to the Casparian strip membrane proteins (CASP) family. As to quaternary structure, homodimer and heterodimers.

It is found in the cell membrane. This is CASP-like protein 1F2 from Populus trichocarpa (Western balsam poplar).